Consider the following 880-residue polypeptide: Alanine--tRNA ligase (880 aa).

Positions 567, 571, 669, and 673 each coordinate Zn(2+).

The protein belongs to the class-II aminoacyl-tRNA synthetase family. Zn(2+) serves as cofactor.

The protein resides in the cytoplasm. The catalysed reaction is tRNA(Ala) + L-alanine + ATP = L-alanyl-tRNA(Ala) + AMP + diphosphate. Its function is as follows. Catalyzes the attachment of alanine to tRNA(Ala) in a two-step reaction: alanine is first activated by ATP to form Ala-AMP and then transferred to the acceptor end of tRNA(Ala). Also edits incorrectly charged Ser-tRNA(Ala) and Gly-tRNA(Ala) via its editing domain. The protein is Alanine--tRNA ligase of Syntrophomonas wolfei subsp. wolfei (strain DSM 2245B / Goettingen).